The chain runs to 176 residues: Acireductone dioxygenase (176 aa).

Positions 100, 102, 106, and 145 each coordinate Fe(2+). Ni(2+) contacts are provided by histidine 100, histidine 102, glutamate 106, and histidine 145.

This sequence belongs to the acireductone dioxygenase (ARD) family. As to quaternary structure, monomer. It depends on Fe(2+) as a cofactor. Requires Ni(2+) as cofactor.

It carries out the reaction 1,2-dihydroxy-5-(methylsulfanyl)pent-1-en-3-one + O2 = 3-(methylsulfanyl)propanoate + CO + formate + 2 H(+). The catalysed reaction is 1,2-dihydroxy-5-(methylsulfanyl)pent-1-en-3-one + O2 = 4-methylsulfanyl-2-oxobutanoate + formate + 2 H(+). The protein operates within amino-acid biosynthesis; L-methionine biosynthesis via salvage pathway; L-methionine from S-methyl-5-thio-alpha-D-ribose 1-phosphate: step 5/6. In terms of biological role, catalyzes 2 different reactions between oxygen and the acireductone 1,2-dihydroxy-3-keto-5-methylthiopentene (DHK-MTPene) depending upon the metal bound in the active site. Fe-containing acireductone dioxygenase (Fe-ARD) produces formate and 2-keto-4-methylthiobutyrate (KMTB), the alpha-ketoacid precursor of methionine in the methionine recycle pathway. Ni-containing acireductone dioxygenase (Ni-ARD) produces methylthiopropionate, carbon monoxide and formate, and does not lie on the methionine recycle pathway. In Bacillus pumilus (strain SAFR-032), this protein is Acireductone dioxygenase.